The following is a 330-amino-acid chain: Methionyl-tRNA formyltransferase (330 aa).

112 to 115 (SLLP) contacts (6S)-5,6,7,8-tetrahydrofolate.

This sequence belongs to the Fmt family.

It carries out the reaction L-methionyl-tRNA(fMet) + (6R)-10-formyltetrahydrofolate = N-formyl-L-methionyl-tRNA(fMet) + (6S)-5,6,7,8-tetrahydrofolate + H(+). Functionally, attaches a formyl group to the free amino group of methionyl-tRNA(fMet). The formyl group appears to play a dual role in the initiator identity of N-formylmethionyl-tRNA by promoting its recognition by IF2 and preventing the misappropriation of this tRNA by the elongation apparatus. The chain is Methionyl-tRNA formyltransferase from Synechocystis sp. (strain ATCC 27184 / PCC 6803 / Kazusa).